The following is a 410-amino-acid chain: Polyadenylation and cleavage factor homolog 5 (410 aa).

Residues 1 to 17 (MASNGSFSAQRNANAGT) are compositionally biased toward polar residues. Residues 1–32 (MASNGSFSAQRNANAGTTMKRRNDNRGYGGGI) form a disordered region. The stretch at 191–214 (SKELTDLLSLLNNEKEKKTSEASN) forms a coiled coil. The C2H2-type zinc-finger motif lies at 247 to 269 (RQCTSCGVRFKCQEEHSKHMDWH).

As to quaternary structure, forms a complex with cleavage and polyadenylation specificity factor (CPSF) subunits CSTF77, CLPS3, PCFS4 and PCFS1.

Its subcellular location is the nucleus. The polypeptide is Polyadenylation and cleavage factor homolog 5 (Arabidopsis thaliana (Mouse-ear cress)).